A 179-amino-acid polypeptide reads, in one-letter code: Iron sulfur cluster assembly protein 1, mitochondrial (179 aa).

The interval 160–179 (RSVKQPTLGPEAAQAETIAT) is disordered.

It belongs to the NifU family. In terms of assembly, component of the core Fe-S cluster (ISC) assembly machinery. Requires [2Fe-2S] cluster as cofactor.

The protein localises to the mitochondrion matrix. It participates in cofactor biosynthesis; iron-sulfur cluster biosynthesis. Scaffold protein for the de novo synthesis of iron-sulfur (Fe-S) clusters within mitochondria, which is required for maturation of both mitochondrial and cytoplasmic [2Fe-2S] and [4Fe-4S] proteins. First, a [2Fe-2S] cluster is transiently assembled on the scaffold protein ISU1. In a second step, the cluster is released from ISU1, transferred to a glutaredoxin, followed by the formation of mitochondrial [2Fe-2S] proteins, the synthesis of [4Fe-4S] clusters and their target-specific insertion into the recipient apoproteins. Cluster assembly on ISU1 depends on the function of the cysteine desulfurase complex NFS1-ISD11, which serves as the sulfur donor for cluster synthesis, the iron-binding protein frataxin as the putative iron donor, and the electron transfer chain comprised of ferredoxin reductase and ferredoxin, which receive their electrons from NADH. The chain is Iron sulfur cluster assembly protein 1, mitochondrial (ISU1) from Debaryomyces hansenii (strain ATCC 36239 / CBS 767 / BCRC 21394 / JCM 1990 / NBRC 0083 / IGC 2968) (Yeast).